The sequence spans 218 residues: Interleukin-37 (218 aa).

The interval M1 to L40 is disordered. Positions M1–F45 are cleaved as a propeptide — removed in mature form. Residues G13 to P22 show a composition bias toward basic and acidic residues.

Belongs to the IL-1 family. Interacts with SMAD3. Binds IL18R1, but not to IL1R1, with lower affinity than IL18, and does not seem to act as a receptor antagonist for IL18. Interacts with cargo receptor TMED10; the interaction mediates the translocation from the cytoplasm into the ERGIC (endoplasmic reticulum-Golgi intermediate compartment) and thereby secretion. Post-translationally, proteolytically converted to the mature form by CASP1. In terms of tissue distribution, in general, low constitutive expression, if any, in healthy tissues; high expression in inflammatory counterparts, including in synovial tissues from individuals with active rheumatoid arthritis. Isoform A, isoform B and isoform C are expressed in testis, colon, placenta, lung and lymph node. Isoform D and isoform E were found only in testis and bone marrow. Whereas only isoform A is found in brain, only isoform B in kidney and only isoform C in heart.

The protein localises to the cytoplasm. The protein resides in the cytosol. Its subcellular location is the nucleus. It is found in the secreted. Its function is as follows. Immune regulatory cytokine that acts as a suppressor of innate inflammatory and immune responses involved in curbing excessive inflammation. Signaling can occur via two mechanisms, intracellularly through nuclear translocation with SMAD3 and extracellularly after secretion and binding to its receptor composed of IL18R1 and IL18RAP. Suppresses, or reduces, pro-inflammatory cytokine production, including IL1A and IL6, as well as CCL12, CSF1, CSF2, CXCL13, IL1B, IL23A and IL1RN, but spares anti-inflammatory cytokines. Inhibits dendritic cell activation. The chain is Interleukin-37 from Homo sapiens (Human).